Here is a 475-residue protein sequence, read N- to C-terminus: Ankyrin repeat, SAM and basic leucine zipper domain-containing protein 1 (475 aa).

The segment at 1–24 is disordered; that stretch reads MAASALRGPPVAGGGESSESEDDG. A phosphoserine mark is found at Ser-17, Ser-18, and Ser-20. ANK repeat units lie at residues 45-74, 78-107, 110-144, 148-177, 181-210, and 214-243; these read EKKE…SVDS, YGWT…NASF, DKQS…DPNV, RLMT…EVNT, NGYT…NKML, and DGKM…PLEG. One can recognise an SAM domain in the interval 272-334; that stretch reads SYTAFGDLEV…KILAALKELQ (63 aa).

Interacts with DDX4, PIWIL1, RANBP9 and TDRD1.

Its subcellular location is the cytoplasm. Its function is as follows. Plays a central role during spermatogenesis by repressing transposable elements and preventing their mobilization, which is essential for the germline integrity. Acts via the piRNA metabolic process, which mediates the repression of transposable elements during meiosis by forming complexes composed of piRNAs and Piwi proteins and governs the methylation and subsequent repression of transposons. Its association with pi-bodies suggests a participation in the primary piRNAs metabolic process. Required prior to the pachytene stage to facilitate the production of multiple types of piRNAs, including those associated with repeats involved in the regulation of retrotransposons. May act by mediating protein-protein interactions during germ cell maturation. The protein is Ankyrin repeat, SAM and basic leucine zipper domain-containing protein 1 (ASZ1) of Gorilla gorilla gorilla (Western lowland gorilla).